The sequence spans 666 residues: Peptidase S41 family protein phomP1' (666 aa).

The N-terminal stretch at 1–27 is a signal peptide; the sequence is MSSFLVQTAVVRLFLLGVVFWFPFALS. N-linked (GlcNAc...) asparagine glycosylation is found at Asn70, Asn214, and Asn234. A peptidase S41 domain region spans residues 303 to 504; sequence DVAVLQITSF…LLQAQGVRTV (202 aa). N-linked (GlcNAc...) asparagine glycans are attached at residues Asn555 and Asn612.

This sequence belongs to the peptidase S41A family.

The protein operates within mycotoxin biosynthesis. Functionally, peptidase S41 family protein; part of the gene cluster that mediates the biosynthesis of the phomopsins, a group of hexapeptide mycotoxins which infects lupins and causes lupinosis disease in livestock. Within the pathway, phomP1 and phomP1' are probably involved in the processing of the phomA and phomA' precursors. The pathway starts with the processing of the precursor phomA by several endopeptidases including kexin proteases as well as the cluster-specific S41 family peptidase phomP1 and the oligopeptidase phomG to produce 10 identical copies of the hexapeptide Tyr-Val-Ile-Pro-Ile-Asp. After being excised from the precursor peptide, the core peptides are cyclized and modified post-translationally by enzymes encoded within the gene cluster. The timing and order of proteolysis of the phomA precursor and PTMs are still unknown. Two tyrosinase-like enzymes, phomQ1 and phomQ2, catalyze the chlorination and hydroxylation of Tyr, respectively. PhomYb, is proposed to be involved in the construction of the macrocyclic structure. The other 4 ustYa family proteins may be involved in PTMs that generate the unique structure of phomopsin A. PhomYa is required for the hydroxylation of C-beta of Tyr. PhomYc, phomYd, and phomYe are responsible for the biosynthesis of 2,3-dehydroisoleucine (dIle), 2,3-dehydroaspartic acid (dAsp), and 3,4-dehydroproline (dPro), respectively. While dIle formation by phomYc is indispensable for the installation of dAsp by phomYd, the order of the other PTMs have not been elucidated yet. Most of the biosynthetic enzymes likely have broad substrate specificity, and thus, there might be a metabolic grid from a precursor to phomopsin A. The enzyme(s) responsible for the biosynthesis of 3,4-dehydrovaline (dVal) have also not been identified yet. Finally, phomM acts as an S-adenosylmethionine-dependent alpha-N-methyltransferase that catalyzes two successive N-methylation reactions, converting N-desmethyl-phomopsin A to phomopsin A and phomopsin A further to an N,N-dimethylated congener called phomopsin E. The protein is Peptidase S41 family protein phomP1' of Diaporthe leptostromiformis (Lupinosis disease fungus).